The sequence spans 224 residues: Envelope glycoprotein L (224 aa).

Residues 1-19 (MGILGWVGLIAVGVLCVRG) form the signal peptide. Residues 20 to 161 (GLPSTEYVIR…FDYSRTRRCV (142 aa)) are interaction with gH. Positions 23–201 (STEYVIRSRV…LTTPPPIIAT (179 aa)) constitute a gL alphaherpesvirus-type domain. 2 cysteine pairs are disulfide-bonded: cysteine 44–cysteine 76 and cysteine 149–cysteine 160. The interval 161-224 (VGRQDLGPTN…RRRRPHSRRL (64 aa)) is disordered. Residues 213–224 (KSRRRRPHSRRL) are compositionally biased toward basic residues.

Belongs to the herpesviridae glycoprotein L (gL) family. Alphaherpesvirinae gL subfamily. As to quaternary structure, interacts with glycoprotein H (gH); this interaction is necessary for the correct processing and cell surface expression of gH. The heterodimer gH/gL seems to interact with gB trimers during fusion.

It localises to the virion membrane. It is found in the host cell membrane. Its subcellular location is the host Golgi apparatus. The protein localises to the host trans-Golgi network. In terms of biological role, the heterodimer glycoprotein H-glycoprotein L is required for the fusion of viral and plasma membranes leading to virus entry into the host cell. Acts as a functional inhibitor of gH and maintains gH in an inhibited form. Upon binding to host integrins, gL dissociates from gH leading to activation of the viral fusion glycoproteins gB and gH. This Human herpesvirus 1 (strain 17) (HHV-1) protein is Envelope glycoprotein L.